The following is a 342-amino-acid chain: tRNA dimethylallyltransferase (342 aa).

Residue 39-46 (GPTGSGKT) participates in ATP binding. 41 to 46 (TGSGKT) lines the substrate pocket. The segment at 64–67 (DSMQ) is interaction with substrate tRNA.

It belongs to the IPP transferase family. Monomer. It depends on Mg(2+) as a cofactor.

The catalysed reaction is adenosine(37) in tRNA + dimethylallyl diphosphate = N(6)-dimethylallyladenosine(37) in tRNA + diphosphate. Its function is as follows. Catalyzes the transfer of a dimethylallyl group onto the adenine at position 37 in tRNAs that read codons beginning with uridine, leading to the formation of N6-(dimethylallyl)adenosine (i(6)A). The polypeptide is tRNA dimethylallyltransferase (Chlamydia caviae (strain ATCC VR-813 / DSM 19441 / 03DC25 / GPIC) (Chlamydophila caviae)).